The sequence spans 332 residues: Glyceraldehyde-3-phosphate dehydrogenase 1 (332 aa).

NAD(+) contacts are provided by residues 11-12, aspartate 32, and arginine 77; that span reads RI. Residues 148-150, threonine 179, 208-209, and arginine 231 each bind D-glyceraldehyde 3-phosphate; these read SCT and TG. Cysteine 149 serves as the catalytic Nucleophile. Asparagine 313 contributes to the NAD(+) binding site.

Belongs to the glyceraldehyde-3-phosphate dehydrogenase family. In terms of assembly, homotetramer.

It is found in the cytoplasm. The catalysed reaction is D-glyceraldehyde 3-phosphate + phosphate + NAD(+) = (2R)-3-phospho-glyceroyl phosphate + NADH + H(+). It functions in the pathway carbohydrate degradation; glycolysis; pyruvate from D-glyceraldehyde 3-phosphate: step 1/5. The chain is Glyceraldehyde-3-phosphate dehydrogenase 1 (Gapdh1) from Drosophila melanogaster (Fruit fly).